A 223-amino-acid chain; its full sequence is Endonuclease V (223 aa).

Positions 35 and 103 each coordinate Mg(2+).

The protein belongs to the endonuclease V family. The cofactor is Mg(2+).

The protein localises to the cytoplasm. It carries out the reaction Endonucleolytic cleavage at apurinic or apyrimidinic sites to products with a 5'-phosphate.. Its function is as follows. DNA repair enzyme involved in the repair of deaminated bases. Selectively cleaves double-stranded DNA at the second phosphodiester bond 3' to a deoxyinosine leaving behind the intact lesion on the nicked DNA. In Escherichia coli O45:K1 (strain S88 / ExPEC), this protein is Endonuclease V.